The sequence spans 121 residues: MNPKRCAACKYLRRRCPKDCVFSPYFPPNDPQKFACVHRIYGAGNVSKMLQQLPDQTRAEAVESLCFEAKCRVDDPVYGCVGIIHLLKTQIQKTQNELAKTQAEIAVAQTKLSQTQNSDFM.

The 102-residue stretch at 4–105 (KRCAACKYLR…NELAKTQAEI (102 aa)) folds into the LOB domain.

Belongs to the LOB domain-containing protein family.

The chain is LOB domain-containing protein 24 (LBD24) from Arabidopsis thaliana (Mouse-ear cress).